Reading from the N-terminus, the 259-residue chain is Thiazole synthase (259 aa).

The Schiff-base intermediate with DXP role is filled by K99. Residues G160, 187-188 (AG), and 209-210 (NT) each bind 1-deoxy-D-xylulose 5-phosphate.

This sequence belongs to the ThiG family. In terms of assembly, homotetramer. Forms heterodimers with either ThiH or ThiS.

Its subcellular location is the cytoplasm. It catalyses the reaction [ThiS sulfur-carrier protein]-C-terminal-Gly-aminoethanethioate + 2-iminoacetate + 1-deoxy-D-xylulose 5-phosphate = [ThiS sulfur-carrier protein]-C-terminal Gly-Gly + 2-[(2R,5Z)-2-carboxy-4-methylthiazol-5(2H)-ylidene]ethyl phosphate + 2 H2O + H(+). The protein operates within cofactor biosynthesis; thiamine diphosphate biosynthesis. In terms of biological role, catalyzes the rearrangement of 1-deoxy-D-xylulose 5-phosphate (DXP) to produce the thiazole phosphate moiety of thiamine. Sulfur is provided by the thiocarboxylate moiety of the carrier protein ThiS. In vitro, sulfur can be provided by H(2)S. This is Thiazole synthase from Solibacter usitatus (strain Ellin6076).